A 232-amino-acid polypeptide reads, in one-letter code: 26.5 kDa heat shock protein, mitochondrial (232 aa).

The N-terminal 42 residues, 1–42 (MALARLALRNLQQKLSPSLMGQSCERGLVGNRHNPMKLNRFM), are a transit peptide targeting the mitochondrion. A disordered region spans residues 44–82 (TSAGEQEDKMNTEVSVSEKKSPRQNFPRRRGRKSLWRNT). Residues 49–64 (QEDKMNTEVSVSEKKS) are compositionally biased toward basic and acidic residues. A compositionally biased stretch (basic residues) spans 69–78 (FPRRRGRKSL). In terms of domain architecture, sHSP spans 114–232 (IFDNFNVNPF…KKNVQEISVE (119 aa)).

The protein belongs to the small heat shock protein (HSP20) family. May form oligomeric structures.

It localises to the mitochondrion. The protein is 26.5 kDa heat shock protein, mitochondrial (HSP26.5) of Arabidopsis thaliana (Mouse-ear cress).